A 196-amino-acid chain; its full sequence is Small ribosomal subunit protein uS4c (196 aa).

The region spanning 82-143 (MRLDNILFRL…KQKSKALIQN (62 aa)) is the S4 RNA-binding domain.

This sequence belongs to the universal ribosomal protein uS4 family. Part of the 30S ribosomal subunit. Contacts protein S5. The interaction surface between S4 and S5 is involved in control of translational fidelity.

Its subcellular location is the plastid. It localises to the chloroplast. Functionally, one of the primary rRNA binding proteins, it binds directly to 16S rRNA where it nucleates assembly of the body of the 30S subunit. Its function is as follows. With S5 and S12 plays an important role in translational accuracy. This Patersonia sp. (strain Lejeune 1997) protein is Small ribosomal subunit protein uS4c (rps4).